Here is a 481-residue protein sequence, read N- to C-terminus: MSLRVYNTLSREKETFVPHKAGRVGMYVCGPTTYDYIHLGNARPLVVFDTIRRYLEHVGYEVVYIQNFTDIDDKIIHRAKEIGEDPIAMAARFVEEYYRDAKALNVRPATIHPKVSAHMAEIIAMIGVLVEKGHAYELGGDVYFSIPSFKDYGKLSGRSLEDLQAGARVDVNERKRHPMDFALWKGAKPGEPSWDSPWGKGRPGWHIECSAMSRKYLGDAFDIHGGGQDLIFPHHENEIAQSEACTGTSPMARYWLHNGFITVNQEKMSKSLGNFFTLREILKRFPGDVIRFYLLSTHYRSPIDFDDSKLEAAQKGLQRLRTSRRLIEEALAASGKEGAERPAGQREKLEEQWLAAKKGFREAMDDDFNTALALSMLFDLAREANTFLHGGFALTPEDRQLLLQVAETFEELAGVLGIDLAGGAAAADDNTVDGLMNLLIGIRAEARKKKDWATADRIRDGLKELGIVIEDTPQGARWKKA.

Cysteine 29 is a binding site for Zn(2+). Positions 31 to 41 (PTTYDYIHLGN) match the 'HIGH' region motif. Residues cysteine 209, histidine 234, and glutamate 238 each coordinate Zn(2+). Residues 267 to 271 (KMSKS) carry the 'KMSKS' region motif. Residue lysine 270 participates in ATP binding.

The protein belongs to the class-I aminoacyl-tRNA synthetase family. As to quaternary structure, monomer. The cofactor is Zn(2+).

It localises to the cytoplasm. It carries out the reaction tRNA(Cys) + L-cysteine + ATP = L-cysteinyl-tRNA(Cys) + AMP + diphosphate. The sequence is that of Cysteine--tRNA ligase from Heliobacterium modesticaldum (strain ATCC 51547 / Ice1).